Reading from the N-terminus, the 302-residue chain is Riboflavin transporter (302 aa).

8 helical membrane passes run 16 to 36 (AVVG…LNVV), 44 to 64 (LAFP…LFSL), 87 to 107 (VVLA…VPIW), 109 to 129 (AIAL…LFLG), 158 to 178 (IGWA…SSLI), 191 to 213 (ITVW…AGFA), 227 to 247 (GLLT…ADAA), and 264 to 284 (GWLF…ALIL). 2 EamA domains span residues 30-151 (FSLL…MIIL) and 170-291 (LLWG…LFIM).

It belongs to the drug/metabolite transporter (DMT) superfamily. 10 TMS drug/metabolite exporter (DME) (TC 2.A.7.3) family.

Its subcellular location is the cell membrane. Functionally, transports riboflavin into the cell. Can also transport FMN and FAD. Required for normal nodule development during colonization of pea plant roots. This chain is Riboflavin transporter, found in Rhizobium johnstonii (strain DSM 114642 / LMG 32736 / 3841) (Rhizobium leguminosarum bv. viciae).